Consider the following 1445-residue polypeptide: Spermatogenesis-associated protein 31E1 (1445 aa).

Residues 64–84 (WMMDFILTSVCGLVLLFLLLL) form a helical membrane-spanning segment. Disordered regions lie at residues 90 to 115 (PPSP…SRSR) and 169 to 262 (VPAK…PDSS). A compositionally biased stretch (basic and acidic residues) spans 101 to 110 (SREPQRERSG). Over residues 241-260 (VFPPSPQPHGPLASSPPPPD) the composition is skewed to pro residues. An N-linked (GlcNAc...) asparagine glycan is attached at Asn-408. Disordered regions lie at residues 411 to 430 (TQPQ…TVGN), 460 to 557 (NPSS…ERTQ), 592 to 619 (LSQP…PGVV), and 637 to 761 (QEQS…KEHL). Residues 664-681 (PQSQAEDTQQALLPSQPS) show a composition bias toward polar residues. N-linked (GlcNAc...) asparagine glycans are attached at residues Asn-819, Asn-906, and Asn-1160. Disordered regions lie at residues 894–966 (FLGK…TCSL), 1143–1242 (RLPT…IGDK), 1254–1280 (KGQT…RKGG), and 1378–1445 (SPKA…CLAS). Composition is skewed to polar residues over residues 906–915 (NRTTSKSVPT) and 1148–1165 (APLS…TASQ). Positions 1202–1217 (DKGEAHRRPRTGEQGH) are enriched in basic and acidic residues.

It belongs to the SPATA31 family.

It localises to the membrane. May play a role in spermatogenesis. This chain is Spermatogenesis-associated protein 31E1 (SPATA31E1), found in Homo sapiens (Human).